The primary structure comprises 488 residues: Glutamyl-tRNA(Gln) amidotransferase subunit A (488 aa).

Active-site charge relay system residues include Lys77 and Ser152. The active-site Acyl-ester intermediate is the Ser176.

It belongs to the amidase family. GatA subfamily. Heterotrimer of A, B and C subunits.

It carries out the reaction L-glutamyl-tRNA(Gln) + L-glutamine + ATP + H2O = L-glutaminyl-tRNA(Gln) + L-glutamate + ADP + phosphate + H(+). Allows the formation of correctly charged Gln-tRNA(Gln) through the transamidation of misacylated Glu-tRNA(Gln) in organisms which lack glutaminyl-tRNA synthetase. The reaction takes place in the presence of glutamine and ATP through an activated gamma-phospho-Glu-tRNA(Gln). This chain is Glutamyl-tRNA(Gln) amidotransferase subunit A, found in Streptococcus pneumoniae (strain 70585).